Reading from the N-terminus, the 244-residue chain is MGHSSKTTEFLGLTFNLSNVLMITIASIIVLLIAVLTTRVLSIRPTKAQNFMEWIVDFVRNIIGSSMDMKTGAPFLALGVTLLMYIFVSNMLGLPFSISVDHNLWWKSPTADPAITMTLAVMVMGLTHYYGVKAKGVKEYTKDYFRPIPLLVPLKIIEEFANTLTLGLRLYGNIFAGEILLGLLAGLATNFYSQNIALGIIGTLGAIVPMIVWQAFSLFVGTIQAFIFTMLTMVYISHKVSDEH.

A run of 7 helical transmembrane segments spans residues 17–37 (LSNV…AVLT), 74–94 (PFLA…MLGL), 112–132 (DPAI…YYGV), 148–168 (IPLL…TLGL), 171–191 (YGNI…ATNF), 196–216 (IALG…WQAF), and 217–237 (SLFV…VYIS).

The protein belongs to the ATPase A chain family. In terms of assembly, F-type ATPases have 2 components, CF(1) - the catalytic core - and CF(0) - the membrane proton channel. CF(1) has five subunits: alpha(3), beta(3), gamma(1), delta(1), epsilon(1). CF(0) has three main subunits: a(1), b(2) and c(9-12). The alpha and beta chains form an alternating ring which encloses part of the gamma chain. CF(1) is attached to CF(0) by a central stalk formed by the gamma and epsilon chains, while a peripheral stalk is formed by the delta and b chains.

It localises to the cell membrane. Its function is as follows. Key component of the proton channel; it plays a direct role in the translocation of protons across the membrane. This is ATP synthase subunit a from Bacillus pumilus (strain SAFR-032).